A 587-amino-acid polypeptide reads, in one-letter code: Nucleoporin p58/p45 (587 aa).

5 consecutive repeat copies span residues 7-8 (FG), 30-31 (FG), 44-45 (FG), 63-64 (FG), and 68-69 (FG). The segment at 7–567 (FGSGTLGSTT…VSNPASAGFG (561 aa)) is 14 X 2 AA repeats of F-G. The tract at residues 196 to 236 (TSAASNEGLGGIDFSTSSDKKSDKTGTRPEDSKALKDENLP) is disordered. Over residues 213 to 234 (SDKKSDKTGTRPEDSKALKDEN) the composition is skewed to basic and acidic residues. 2 coiled-coil regions span residues 244–264 (ENLQKFVKEQKQVQEEISRMS) and 302–369 (ETAQ…SHIT). At Thr-319 the chain carries Phosphothreonine. Tandem repeats lie at residues 476-477 (FG), 480-481 (FG), 501-502 (FG), 507-508 (FG), 517-518 (FG), 519-520 (FG), 533-534 (FG), 556-557 (FG), and 566-567 (FG). The segment at 565-587 (GFGTGGQLLQLKRPPAGNKRGKR) is disordered.

It belongs to the NUP58 family. Component of the p62 complex, a complex at least composed of NUP62, NUP54, and NUP58. Interacts with NUTF2. Interacts with SRP1-alpha and Importin p97 proteins when they are together, but not with SRP1-alpha protein alone. Post-translationally, O-glycosylated.

Its subcellular location is the nucleus. It localises to the nuclear pore complex. The protein resides in the nucleus membrane. Its function is as follows. Component of the nuclear pore complex, a complex required for the trafficking across the nuclear membrane. This is Nucleoporin p58/p45 from Mus musculus (Mouse).